Consider the following 1036-residue polypeptide: Presequence protease, mitochondrial (1036 aa).

A mitochondrion-targeting transit peptide spans 1-15; it reads MWRFSGRRGLCAVQR. H104 is a binding site for Zn(2+). E107 functions as the Proton acceptor in the catalytic mechanism. Zn(2+)-binding residues include H108 and E205. Cysteines 119 and 556 form a disulfide. N6-acetyllysine is present on K759. K770 is modified (N6-acetyllysine; alternate). N6-succinyllysine; alternate is present on K770. A disordered region spans residues 806-833; that stretch reads SKKERKPVRPHIVEKPTPSGPSGAAHVS. An N6-succinyllysine modification is found at K848. K883 is modified (N6-acetyllysine). K945 is modified (N6-succinyllysine).

It belongs to the peptidase M16 family. PreP subfamily. In terms of assembly, monomer and homodimer; homodimerization is induced by binding of the substrate. Zn(2+) serves as cofactor. A disulfide bond locks the enzyme in the closed conformation preventing substrate entry into the catalytic chamber.

It is found in the mitochondrion matrix. Mainly exists in a closed and catalytically competent conformation but a closed-to-open switch allows substrate entry into the catalytic chamber. Substrate binding induces closure and dimerization. A disulfide bond may lock the enzyme in a closed conformation preventing substrate entry into the catalytic chamber, participating in redox regulation of the enzyme. Inhibited by metal-chelating agents. Inhibited by nickel and zinc excess, and slightly activated by manganese. Its function is as follows. Metalloendopeptidase of the mitochondrial matrix that functions in peptide cleavage and degradation rather than in protein processing. Has an ATP-independent activity. Specifically cleaves peptides in the range of 5 to 65 residues. Shows a preference for cleavage after small polar residues and before basic residues, but without any positional preference. Degrades the transit peptides of mitochondrial proteins after their cleavage. Also degrades other unstructured peptides. It is also able to degrade amyloid-beta protein 40, one of the peptides produced by APP processing, when it accumulates in mitochondrion. It is a highly efficient protease, at least toward amyloid-beta protein 40. Cleaves that peptide at a specific position and is probably not processive, releasing digested peptides intermediates that can be further cleaved subsequently. It is also able to degrade amyloid-beta protein 42. This Mus musculus (Mouse) protein is Presequence protease, mitochondrial.